The chain runs to 296 residues: NAD kinase (296 aa).

The Proton acceptor role is filled by Asp-72. Residues Asp-72–Gly-73, Asn-146–Asp-147, Arg-157, Lys-174, Asp-176, Thr-187–Ser-192, and Gln-247 each bind NAD(+).

The protein belongs to the NAD kinase family. A divalent metal cation is required as a cofactor.

The protein resides in the cytoplasm. It carries out the reaction NAD(+) + ATP = ADP + NADP(+) + H(+). Involved in the regulation of the intracellular balance of NAD and NADP, and is a key enzyme in the biosynthesis of NADP. Catalyzes specifically the phosphorylation on 2'-hydroxyl of the adenosine moiety of NAD to yield NADP. The chain is NAD kinase from Pseudomonas putida (strain GB-1).